A 94-amino-acid polypeptide reads, in one-letter code: Translation initiation factor 1A 2 (94 aa).

The region spanning 6–80 is the S1-like domain; the sequence is GRRNLRMPSD…EKANIEWRYS (75 aa).

This sequence belongs to the eIF-1A family.

Functionally, seems to be required for maximal rate of protein biosynthesis. Enhances ribosome dissociation into subunits and stabilizes the binding of the initiator Met-tRNA(I) to 40 S ribosomal subunits. The chain is Translation initiation factor 1A 2 from Haloquadratum walsbyi (strain DSM 16790 / HBSQ001).